The following is a 359-amino-acid chain: Fructose-bisphosphate aldolase 1 (359 aa).

Ser50 is a binding site for D-glyceraldehyde 3-phosphate. Asp83 functions as the Proton donor in the catalytic mechanism. The Zn(2+) site is built by His84, Asp105, Glu142, and His198. Dihydroxyacetone phosphate is bound at residue Gly199. Residue His232 coordinates Zn(2+). Residues 233 to 235 (GSS) and 275 to 278 (NIDT) contribute to the dihydroxyacetone phosphate site.

This sequence belongs to the class II fructose-bisphosphate aldolase family. Homodimer. Zn(2+) serves as cofactor.

It carries out the reaction beta-D-fructose 1,6-bisphosphate = D-glyceraldehyde 3-phosphate + dihydroxyacetone phosphate. It participates in carbohydrate biosynthesis; Calvin cycle. The protein operates within carbohydrate degradation; glycolysis; D-glyceraldehyde 3-phosphate and glycerone phosphate from D-glucose: step 4/4. Its function is as follows. Catalyzes the aldol condensation of dihydroxyacetone phosphate (DHAP or glycerone-phosphate) with glyceraldehyde 3-phosphate (G3P) to form fructose 1,6-bisphosphate (FBP) in gluconeogenesis and the reverse reaction in glycolysis. The protein is Fructose-bisphosphate aldolase 1 (cfxA) of Cereibacter sphaeroides (Rhodobacter sphaeroides).